Consider the following 339-residue polypeptide: Large ribosomal subunit protein uL11m (339 aa).

The protein belongs to the universal ribosomal protein uL11 family.

Its subcellular location is the mitochondrion. The polypeptide is Large ribosomal subunit protein uL11m (RPL11) (Acanthamoeba castellanii (Amoeba)).